The sequence spans 301 residues: Probable alpha-L-glutamate ligase (301 aa).

Residues 104–287 (LQLLSRRGVG…VAGLIIQYLE (184 aa)) enclose the ATP-grasp domain. ATP is bound by residues lysine 141, 178–179 (EY), aspartate 187, and 211–213 (RSN). Positions 248, 260, and 262 each coordinate Mg(2+). Mn(2+)-binding residues include aspartate 248, glutamate 260, and asparagine 262.

This sequence belongs to the RimK family. Mg(2+) serves as cofactor. Mn(2+) is required as a cofactor.

The sequence is that of Probable alpha-L-glutamate ligase from Stutzerimonas stutzeri (strain A1501) (Pseudomonas stutzeri).